An 89-amino-acid polypeptide reads, in one-letter code: Small ribosomal subunit protein uS14 (89 aa).

Belongs to the universal ribosomal protein uS14 family. As to quaternary structure, part of the 30S ribosomal subunit. Contacts proteins S3 and S10.

Its function is as follows. Binds 16S rRNA, required for the assembly of 30S particles and may also be responsible for determining the conformation of the 16S rRNA at the A site. In Akkermansia muciniphila (strain ATCC BAA-835 / DSM 22959 / JCM 33894 / BCRC 81048 / CCUG 64013 / CIP 107961 / Muc), this protein is Small ribosomal subunit protein uS14.